A 360-amino-acid chain; its full sequence is Phosphoserine aminotransferase (360 aa).

Arginine 41 contacts L-glutamate. The pyridoxal 5'-phosphate site is built by tryptophan 101, threonine 152, aspartate 172, and glutamine 195. Lysine 196 is modified (N6-(pyridoxal phosphate)lysine). 237–238 is a pyridoxal 5'-phosphate binding site; sequence NT.

The protein belongs to the class-V pyridoxal-phosphate-dependent aminotransferase family. SerC subfamily. In terms of assembly, homodimer. Pyridoxal 5'-phosphate serves as cofactor.

It localises to the cytoplasm. It carries out the reaction O-phospho-L-serine + 2-oxoglutarate = 3-phosphooxypyruvate + L-glutamate. The enzyme catalyses 4-(phosphooxy)-L-threonine + 2-oxoglutarate = (R)-3-hydroxy-2-oxo-4-phosphooxybutanoate + L-glutamate. It participates in amino-acid biosynthesis; L-serine biosynthesis; L-serine from 3-phospho-D-glycerate: step 2/3. It functions in the pathway cofactor biosynthesis; pyridoxine 5'-phosphate biosynthesis; pyridoxine 5'-phosphate from D-erythrose 4-phosphate: step 3/5. In terms of biological role, catalyzes the reversible conversion of 3-phosphohydroxypyruvate to phosphoserine and of 3-hydroxy-2-oxo-4-phosphonooxybutanoate to phosphohydroxythreonine. The chain is Phosphoserine aminotransferase from Paraburkholderia phymatum (strain DSM 17167 / CIP 108236 / LMG 21445 / STM815) (Burkholderia phymatum).